A 72-amino-acid chain; its full sequence is ATP synthase protein 8 (72 aa).

A helical membrane pass occupies residues Trp16–Val36.

This sequence belongs to the ATPase protein 8 family. In terms of assembly, F-type ATPases have 2 components, CF(1) - the catalytic core - and CF(0) - the membrane proton channel.

It localises to the mitochondrion membrane. Mitochondrial membrane ATP synthase (F(1)F(0) ATP synthase or Complex V) produces ATP from ADP in the presence of a proton gradient across the membrane which is generated by electron transport complexes of the respiratory chain. F-type ATPases consist of two structural domains, F(1) - containing the extramembraneous catalytic core and F(0) - containing the membrane proton channel, linked together by a central stalk and a peripheral stalk. During catalysis, ATP synthesis in the catalytic domain of F(1) is coupled via a rotary mechanism of the central stalk subunits to proton translocation. Part of the complex F(0) domain. Minor subunit located with subunit a in the membrane. In Metridium senile (Brown sea anemone), this protein is ATP synthase protein 8 (MTATP8).